The primary structure comprises 276 residues: Ribonuclease 3 (276 aa).

One can recognise an RNase III domain in the interval 30–161; that stretch reads LTAFIRSLFK…LTGAIYLDRG (132 aa). A Mg(2+)-binding site is contributed by E74. D78 is a catalytic residue. Mg(2+) is bound by residues D147 and E150. E150 is an active-site residue. The DRBM domain maps to 188–257; that stretch reads NHKSRLIEHT…AEEAMGALER (70 aa).

The protein belongs to the ribonuclease III family. In terms of assembly, homodimer. Requires Mg(2+) as cofactor.

It localises to the cytoplasm. It carries out the reaction Endonucleolytic cleavage to 5'-phosphomonoester.. Digests double-stranded RNA. Involved in the processing of primary rRNA transcript to yield the immediate precursors to the large and small rRNAs (23S and 16S). Processes some mRNAs, and tRNAs when they are encoded in the rRNA operon. Processes pre-crRNA and tracrRNA of type II CRISPR loci if present in the organism. The chain is Ribonuclease 3 from Chlorobium luteolum (strain DSM 273 / BCRC 81028 / 2530) (Pelodictyon luteolum).